We begin with the raw amino-acid sequence, 1434 residues long: Probable ATP-dependent RNA helicase spindle-E (1434 aa).

The 168-residue stretch at 125–292 (LAAINAHPVV…FTTTNSIPPV (168 aa)) folds into the Helicase ATP-binding domain. 138–145 (GETGCGKT) is a binding site for ATP. A DEAH box motif is present at residues 238-241 (DEVH). The Helicase C-terminal domain maps to 354–526 (QSRQSYDEAL…NSVLKAKVLN (173 aa)). In terms of domain architecture, Tudor spans 938–1001 (ASAIAKGMMV…RLMPRELTEQ (64 aa)).

Belongs to the DEAD box helicase family. DEAH subfamily.

It is found in the cytoplasm. The protein resides in the perinuclear region. It localises to the cytoplasmic ribonucleoprotein granule. It carries out the reaction ATP + H2O = ADP + phosphate + H(+). Its function is as follows. Probable ATP-binding RNA helicase which plays a central role during spermatogenesis and oogenesis by repressing transposable elements and preventing their mobilization, which is essential for the germline integrity. Acts via the piRNA metabolic process, which mediates the repression of transposable elements during meiosis by forming complexes composed of piRNAs and Piwi and govern the methylation and subsequent repression of transposons. Involved in the repression of LTR retrotransposon copia. Also involved in telomere regulation by repressing specialized telomeric retroelements HeT-A, TAHRE, and TART; Drosophila telomeres being maintained by transposition of specialized telomeric retroelements. Involved in telomeric trans-silencing, a repression mechanism by which a transposon or a transgene inserted in subtelomeric heterochromatin has the capacity to repress in trans in the female germline, a homologous transposon, or transgene located in euchromatin. Involved in the repression of testis-expressed Stellate genes by the homologous Su(Ste) repeats. Required for anteroposterior and dorsoventral axis formation during oogenesis. Key component of the perinuclear meiotic nuage, an electron dense structure involved in the post-transcriptional regulation of transposons and mRNAs; required for recruitment of other nuage comonents including vas, krimp, aub and mael. May have a role in production of piwi-interacting RNA (piRNA). This is Probable ATP-dependent RNA helicase spindle-E from Drosophila melanogaster (Fruit fly).